A 155-amino-acid polypeptide reads, in one-letter code: Myelin basic protein (155 aa).

The tract at residues 1 to 72 (MASATTSDHA…HQGARRQTDD (72 aa)) is disordered. A2 is subject to N-acetylalanine; in forms C1, C2, C3 and C8. A Deamidated glutamine; in forms C1, C2 and C3 modification is found at Q12. Residues 37 to 49 (GSRKVPEKGKEPA) show a composition bias toward basic and acidic residues. S73 and S84 each carry phosphoserine; in forms C1, C2 and C3. The interval 113–155 (RAHYGAAGSSKSKDGFRGRRDGSGTLSSFFKMGKKGEGSPARR) is disordered. S121 and S122 each carry phosphoserine; in forms C1 and C3. Residues 123–134 (KSKDGFRGRRDG) show a composition bias toward basic and acidic residues. 3 positions are modified to phosphoserine; in forms C1, C2 and C3: S135, S139, and S140.

The protein belongs to the myelin basic protein family. In terms of processing, several charge isomers are produced as a result of optional post-translational modifications, such as phosphorylation, deamidation and citrullination. Dogfish MBP contains four major components designated as C1, C2, C3 and C8. C1 and C3, but not C2 are phosphorylated at either Ser-121 or Ser-122; C2 is phosphorylated at 2 or 3 sites among Ser-135, Ser-139 and Ser-140. Hydroxyproline and citrulline are present but were not identified in either C1, C2 or C3, which suggests their presence in C8.

It localises to the myelin membrane. Its function is as follows. This protein may function to maintain proper structure of myelin. This chain is Myelin basic protein (MBP), found in Squalus acanthias (Spiny dogfish).